A 1456-amino-acid chain; its full sequence is CLIP-associating protein 1-B (1456 aa).

3 HEAT repeats span residues 68–87 (LLGMDILSALVTRLQDRFRT), 88–124 (QIGTVLPSLMDRLGDAKDSVRDQDQNLLIKIMEQASN), and 163–200 (LTLSKIVPHICNLLGDPNSQVRDAAINCLVEIYRHVGE). The interval 237 to 296 (TDKNFDDEDSVDGNRPSSASSSASSKAPQTARRGVSLGTGRRPGTSSAAPKTGGTAKEGA) is disordered. The segment covering 284 to 296 (AAPKTGGTAKEGA) has biased composition (low complexity). Residues 442 to 479 (THVPRLIPIITSNCTSKSVAVRRRCYEFLDLLLQEWQT) form an HEAT 4 repeat. Disordered regions lie at residues 547–728 (SIVS…DRFG) and 776–796 (GMYSDDDANSDASSACSERSY). The segment covering 550 to 569 (SLPQSDRSSSSSQESLNRPL) has biased composition (low complexity). Over residues 573-594 (RSPTGSTVSRATSKSTTGSLQR) the composition is skewed to polar residues. 3 stretches are compositionally biased toward low complexity: residues 603–618 (AAATSKTKAASGASTA), 642–656 (QSSGSTTSTASTPAD), and 665–679 (VVSQSQPGSRSSSPG). Over residues 711-721 (QGCSRETSPSR) the composition is skewed to polar residues. The span at 785 to 796 (SDASSACSERSY) shows a compositional bias: low complexity. An HEAT 5 repeat occupies 930-967 (QQFNILMRFIVDQTQTPNLKVKVAILKYIESLARQMDP). Disordered regions lie at residues 1037-1080 (LKNS…GLSP) and 1121-1147 (VRRDGKKESEMGSCDAGMASPASDLRG). The segment covering 1038–1050 (KNSSNSSMGSPSN) has biased composition (low complexity). The span at 1062–1074 (SRASPLTSPTNCS) shows a compositional bias: polar residues. Residues 1121 to 1130 (VRRDGKKESE) are compositionally biased toward basic and acidic residues. HEAT repeat units follow at residues 1260–1297 (EHFKTILLLLLETLGDKDHAIRALALRVLREILRNQPA) and 1378–1415 (QILPDIIPGLLQGYDNTESSVRKASVFCLVAVYSVIGE).

The protein belongs to the CLASP family. As to quaternary structure, interacts (via C-terminus) with clip1/clip-170, and cenpe.

The protein resides in the cytoplasm. The protein localises to the cytoskeleton. Its subcellular location is the microtubule organizing center. It is found in the centrosome. It localises to the chromosome. The protein resides in the centromere. The protein localises to the kinetochore. Its subcellular location is the spindle. It is found in the golgi apparatus. It localises to the trans-Golgi network. In terms of biological role, microtubule plus-end tracking protein that promotes the stabilization of dynamic microtubules during anaphase. Plays a crucial role in chromatin-induced microtubule formation. May also act at microtubule minus ends. May be involved in the nucleation of noncentrosomal microtubules originating from the trans-Golgi network (TGN). The sequence is that of CLIP-associating protein 1-B from Xenopus laevis (African clawed frog).